The chain runs to 136 residues: Nucleoside diphosphate kinase (136 aa).

6 residues coordinate ATP: Lys-10, Phe-58, Arg-86, Thr-92, Arg-104, and Asn-114. Catalysis depends on His-117, which acts as the Pros-phosphohistidine intermediate.

This sequence belongs to the NDK family. Homotetramer. Mg(2+) serves as cofactor.

Its subcellular location is the cytoplasm. The enzyme catalyses a 2'-deoxyribonucleoside 5'-diphosphate + ATP = a 2'-deoxyribonucleoside 5'-triphosphate + ADP. The catalysed reaction is a ribonucleoside 5'-diphosphate + ATP = a ribonucleoside 5'-triphosphate + ADP. In terms of biological role, major role in the synthesis of nucleoside triphosphates other than ATP. The ATP gamma phosphate is transferred to the NDP beta phosphate via a ping-pong mechanism, using a phosphorylated active-site intermediate. The chain is Nucleoside diphosphate kinase from Saccharopolyspora erythraea (strain ATCC 11635 / DSM 40517 / JCM 4748 / NBRC 13426 / NCIMB 8594 / NRRL 2338).